The chain runs to 617 residues: 1-deoxy-D-xylulose-5-phosphate synthase (617 aa).

Thiamine diphosphate-binding positions include His-76 and 117 to 119; that span reads GHS. Residue Asp-148 coordinates Mg(2+). Residues 149 to 150, Asn-177, Tyr-285, and Glu-366 contribute to the thiamine diphosphate site; that span reads GA. A Mg(2+)-binding site is contributed by Asn-177.

This sequence belongs to the transketolase family. DXPS subfamily. Homodimer. Mg(2+) is required as a cofactor. The cofactor is thiamine diphosphate.

It carries out the reaction D-glyceraldehyde 3-phosphate + pyruvate + H(+) = 1-deoxy-D-xylulose 5-phosphate + CO2. It participates in metabolic intermediate biosynthesis; 1-deoxy-D-xylulose 5-phosphate biosynthesis; 1-deoxy-D-xylulose 5-phosphate from D-glyceraldehyde 3-phosphate and pyruvate: step 1/1. In terms of biological role, catalyzes the acyloin condensation reaction between C atoms 2 and 3 of pyruvate and glyceraldehyde 3-phosphate to yield 1-deoxy-D-xylulose-5-phosphate (DXP). The polypeptide is 1-deoxy-D-xylulose-5-phosphate synthase (Histophilus somni (strain 129Pt) (Haemophilus somnus)).